Consider the following 883-residue polypeptide: NF-X1-type zinc finger protein NFXL2 (883 aa).

Residues 1–10 are compositionally biased toward polar residues; the sequence is MTNMAGTATT. The tract at residues 1–44 is disordered; that stretch reads MTNMAGTATTEFRWKSPPQPPSQEQPISDSDSDSGSDSENHQHR. The RING-type; degenerate zinc finger occupies 87–152; sequence CLICLERIKR…EAVWNCPKCR (66 aa). 11 consecutive NF-X1-type zinc fingers follow at residues 198–216, 250–269, 303–322, 357–377, 410–429, 437–456, 494–515, 523–568, 605–636, 646–664, and 709–738; these read CGHCCLLLCHPGPCASCPK, CNIHNCREICHDGECPPCRE, CGKHVCERGCHAGECGLCPY, CGYHRCPERCHRGPCLETCRI, CARHACRRRCCDGECPPCSE, CRNHKCQSPCHQGPCAPCPI, CRHGQNQKPHKCHYGACPPCRL, CGHK…RCPE, CGNHYCSYFCHALDIRSSSLDKRSESCEKCDL, CQHPCPRRCHPEDCPPCKT, and CTHLCPEICHPGQCPLPEKCGKKVVVRCKC. The interval 798 to 824 is disordered; the sequence is EIEEKEEPSGKNASKRRKRRGRGQDIQ. The chain crosses the membrane as a helical span at residues 841-863; it reads MVVMLVAMLAAVSYYGYKGLLWL.

The protein belongs to the NFX1 family. Interacts with ADO1/ZTL. As to expression, constitutively expressed in mesophyll and guard cells.

It localises to the nucleus. The protein localises to the membrane. The protein operates within protein modification; protein ubiquitination. Probable transcriptional regulator. May mediate E2- or E3-dependent ubiquitination. Required to gate light sensitivity during the night. Regulates the speed of the clock by acting in the feedback loop between CCA1, LHY and APRR1/TOC1. Promotes the expression of CCA1 at night but not by days. This activational effect is enhanced by interaction with ADO1/ZTL. Association with ADO1/ZTL is not leading to the degradation of NFXL2. Confers sensitivity to osmotic stress such as high salinity. Prevents H(2)O(2) production and abscisic acid accumulation. Part of a regulatory network that integrates the biosynthesis and action of abscisic acid, reactive oxygen species and cuticle components. This Arabidopsis thaliana (Mouse-ear cress) protein is NF-X1-type zinc finger protein NFXL2 (NFXL2).